Reading from the N-terminus, the 904-residue chain is Translation initiation factor IF-2 (904 aa).

Disordered stretches follow at residues 102-122, 134-252, and 267-316; these read TYVK…PDEE, RQRN…MVAG, and HLSA…ERPT. The span at 134 to 177 shows a compositional bias: basic and acidic residues; that stretch reads RQRNLEEQQRLAESDRVRDEAIQRKREEEQAAKDRAEAERKAAE. Over residues 178 to 230 the composition is skewed to low complexity; it reads EAAAAASAPAPVADAPKPSAAAPAARLPSSPSSAPRAARPAGASPASRPAAPA. One can recognise a tr-type G domain in the interval 403-572; it reads SRPPVVTIMG…SLQAEVLELK (170 aa). The tract at residues 412 to 419 is G1; the sequence is GHVDHGKT. 412–419 contacts GTP; the sequence is GHVDHGKT. Residues 437 to 441 form a G2 region; it reads GITQH. The interval 458–461 is G3; that stretch reads DTPG. GTP-binding positions include 458 to 462 and 512 to 515; these read DTPGH and NKID. The interval 512–515 is G4; it reads NKID. The G5 stretch occupies residues 548 to 550; that stretch reads SAK.

The protein belongs to the TRAFAC class translation factor GTPase superfamily. Classic translation factor GTPase family. IF-2 subfamily.

The protein resides in the cytoplasm. Functionally, one of the essential components for the initiation of protein synthesis. Protects formylmethionyl-tRNA from spontaneous hydrolysis and promotes its binding to the 30S ribosomal subunits. Also involved in the hydrolysis of GTP during the formation of the 70S ribosomal complex. In Xanthomonas axonopodis pv. citri (strain 306), this protein is Translation initiation factor IF-2.